Here is a 67-residue protein sequence, read N- to C-terminus: DNA-directed RNA polymerase subunit omega (67 aa).

This sequence belongs to the RNA polymerase subunit omega family. The RNAP catalytic core consists of 2 alpha, 1 beta, 1 beta' and 1 omega subunit. When a sigma factor is associated with the core the holoenzyme is formed, which can initiate transcription.

It catalyses the reaction RNA(n) + a ribonucleoside 5'-triphosphate = RNA(n+1) + diphosphate. In terms of biological role, promotes RNA polymerase assembly. Latches the N- and C-terminal regions of the beta' subunit thereby facilitating its interaction with the beta and alpha subunits. The polypeptide is DNA-directed RNA polymerase subunit omega (Polaromonas sp. (strain JS666 / ATCC BAA-500)).